A 63-amino-acid chain; its full sequence is Cytochrome c oxidase subunit 7C, mitochondrial (63 aa).

The transit peptide at 1–16 (MLGQSIRRFTTSVVRR) directs the protein to the mitochondrion. Over 17–33 (SHYEEGPGKNLPFSVEN) the chain is Mitochondrial matrix. At Lys-25 the chain carries N6-acetyllysine; alternate. Lys-25 is subject to N6-succinyllysine; alternate. Residues 34-60 (KWSLLAKMCLYFGSAFATPFLIVRHQL) traverse the membrane as a helical segment. At 61 to 63 (LKT) the chain is on the mitochondrial intermembrane side.

This sequence belongs to the cytochrome c oxidase VIIc family. Component of the cytochrome c oxidase (complex IV, CIV), a multisubunit enzyme composed of 14 subunits. The complex is composed of a catalytic core of 3 subunits MT-CO1, MT-CO2 and MT-CO3, encoded in the mitochondrial DNA, and 11 supernumerary subunits COX4I, COX5A, COX5B, COX6A, COX6B, COX6C, COX7A, COX7B, COX7C, COX8 and NDUFA4, which are encoded in the nuclear genome. The complex exists as a monomer or a dimer and forms supercomplexes (SCs) in the inner mitochondrial membrane with NADH-ubiquinone oxidoreductase (complex I, CI) and ubiquinol-cytochrome c oxidoreductase (cytochrome b-c1 complex, complex III, CIII), resulting in different assemblies (supercomplex SCI(1)III(2)IV(1) and megacomplex MCI(2)III(2)IV(2)). Interacts with RAB5IF.

It is found in the mitochondrion inner membrane. It participates in energy metabolism; oxidative phosphorylation. Functionally, component of the cytochrome c oxidase, the last enzyme in the mitochondrial electron transport chain which drives oxidative phosphorylation. The respiratory chain contains 3 multisubunit complexes succinate dehydrogenase (complex II, CII), ubiquinol-cytochrome c oxidoreductase (cytochrome b-c1 complex, complex III, CIII) and cytochrome c oxidase (complex IV, CIV), that cooperate to transfer electrons derived from NADH and succinate to molecular oxygen, creating an electrochemical gradient over the inner membrane that drives transmembrane transport and the ATP synthase. Cytochrome c oxidase is the component of the respiratory chain that catalyzes the reduction of oxygen to water. Electrons originating from reduced cytochrome c in the intermembrane space (IMS) are transferred via the dinuclear copper A center (CU(A)) of subunit 2 and heme A of subunit 1 to the active site in subunit 1, a binuclear center (BNC) formed by heme A3 and copper B (CU(B)). The BNC reduces molecular oxygen to 2 water molecules using 4 electrons from cytochrome c in the IMS and 4 protons from the mitochondrial matrix. The polypeptide is Cytochrome c oxidase subunit 7C, mitochondrial (COX7C) (Pongo pygmaeus (Bornean orangutan)).